A 340-amino-acid chain; its full sequence is Porphobilinogen deaminase (340 aa).

C258 carries the S-(dipyrrolylmethanemethyl)cysteine modification.

This sequence belongs to the HMBS family. Dipyrromethane is required as a cofactor.

It carries out the reaction 4 porphobilinogen + H2O = hydroxymethylbilane + 4 NH4(+). It functions in the pathway porphyrin-containing compound metabolism; protoporphyrin-IX biosynthesis; coproporphyrinogen-III from 5-aminolevulinate: step 2/4. Tetrapolymerization of the monopyrrole PBG into the hydroxymethylbilane pre-uroporphyrinogen in several discrete steps. The polypeptide is Porphobilinogen deaminase (HEM3) (Candida albicans (strain SC5314 / ATCC MYA-2876) (Yeast)).